The chain runs to 122 residues: uncharacterized protein (122 aa).

A signal peptide spans 1–18 (MYSMAFLASSGLVANSSA). N-linked (GlcNAc...) asparagine glycosylation is present at asparagine 15.

This is an uncharacterized protein from Saccharomyces cerevisiae (strain ATCC 204508 / S288c) (Baker's yeast).